Here is a 431-residue protein sequence, read N- to C-terminus: Enolase (431 aa).

Gln-167 is a (2R)-2-phosphoglycerate binding site. The active-site Proton donor is Glu-209. Mg(2+) contacts are provided by Asp-246, Glu-290, and Asp-317. (2R)-2-phosphoglycerate-binding residues include Lys-342, Arg-371, Ser-372, and Lys-393. Lys-342 acts as the Proton acceptor in catalysis.

Belongs to the enolase family. In terms of assembly, component of the RNA degradosome, a multiprotein complex involved in RNA processing and mRNA degradation. Requires Mg(2+) as cofactor.

It is found in the cytoplasm. The protein localises to the secreted. Its subcellular location is the cell surface. It catalyses the reaction (2R)-2-phosphoglycerate = phosphoenolpyruvate + H2O. It participates in carbohydrate degradation; glycolysis; pyruvate from D-glyceraldehyde 3-phosphate: step 4/5. In terms of biological role, catalyzes the reversible conversion of 2-phosphoglycerate (2-PG) into phosphoenolpyruvate (PEP). It is essential for the degradation of carbohydrates via glycolysis. This is Enolase from Pectobacterium atrosepticum (strain SCRI 1043 / ATCC BAA-672) (Erwinia carotovora subsp. atroseptica).